The chain runs to 554 residues: Glutamine--tRNA ligase (554 aa).

Positions 34-44 (PEPNGYLHIGH) match the 'HIGH' region motif. Residues 35 to 37 (EPN) and 41 to 47 (HIGHAKS) contribute to the ATP site. Residues D67 and Y212 each coordinate L-glutamine. ATP contacts are provided by residues T231, 261-262 (RL), and 269-271 (MSK). The 'KMSKS' region motif lies at 268–272 (VMSKR).

The protein belongs to the class-I aminoacyl-tRNA synthetase family. As to quaternary structure, monomer.

It localises to the cytoplasm. The enzyme catalyses tRNA(Gln) + L-glutamine + ATP = L-glutaminyl-tRNA(Gln) + AMP + diphosphate. The polypeptide is Glutamine--tRNA ligase (Shigella boydii serotype 4 (strain Sb227)).